A 116-amino-acid chain; its full sequence is MATKKEETFYELYRRTSLGICLTDALDDLITNDRINPQLAMKILANFDRVVAETLQEKVKARLQFKGALDNYRFCDDVWTFVIKNINFKLDGGNQTIQADKVKIVSCNAKRPGTDA.

This sequence belongs to the TFIIA subunit 2 family. In terms of assembly, TFIIA is a heterodimer composed of the large TOA1 and the small TOA2 subunits.

The protein localises to the nucleus. In terms of biological role, TFIIA is a component of the transcription machinery of RNA polymerase II and plays an important role in transcriptional activation. TFIIA in a complex with tbp mediates transcriptional activity. The polypeptide is Transcription initiation factor IIA subunit 2 (TOA2) (Pyricularia oryzae (strain 70-15 / ATCC MYA-4617 / FGSC 8958) (Rice blast fungus)).